We begin with the raw amino-acid sequence, 1647 residues long: Maestro heat-like repeat-containing protein family member 1 (1647 aa).

HEAT repeat units lie at residues 9 to 47, 65 to 103, 224 to 262, 351 to 389, 597 to 635, 968 to 1006, 1131 to 1168, 1364 to 1400, 1403 to 1441, 1490 to 1528, and 1612 to 1647; these read SPVL…RQPN, QTHR…SEMT, SEFY…ILSV, RGYS…RLDV, DVTL…TIKN, FDSI…IGFM, SLAN…DKNL, KELI…AGVE, NRYA…VADE, YEQI…LMRS, and NINS…LHHY.

Belongs to the MROH1 family. As to quaternary structure, homooligomer.

It is found in the lysosome membrane. In terms of biological role, lysosome fission factor. This is Maestro heat-like repeat-containing protein family member 1 (mroh1) from Dictyostelium discoideum (Social amoeba).